The following is a 579-amino-acid chain: MVSMSTTGNAHTENVQHRLTVETVEIAPNTTAIRCLDWDRDRFDIEFGLQNGTTYNSYLIRGEQTVLVDTSHQKFRQLYLETLKGLINPKAIDYIIVSHTEPDHSGLVEDVLQLAPRATVLASKIALQFLEGLVHDPFSKRIVKSGDRIDIGKGHEIEFVSAPNLHWPDTIFSYDRKTEVIYTCDAFGMHFCDNRTFDEDLEAIEADFRFYYDCLMGPNARSLLNAMKRMGDLGKIKIIANGHGPLLYHHLDVLTECYQSWSQRQAKSETTVGLFYVADYGYSNLLVQAIGEGIQKTGVAVEMIDLSTAEIQEIQELAGRAAGLIIGMPPTTSVAAQAGISSLLSVVKDKQAVGLFECFGGDDEPVDTIRRKFIDLGVKEAFPAIRIKDVPGASAYQLCTEAGTDLGQLLTRERNIKQIKSLDVNMEKALGRISNGLYIVTTKKGDVSSAMLASWVSQASLQPLGFTIAVAKDRAIDSLMQVGDRFVLNVLEEGNYQELKKQFLKRLHPGADRFAGVRTQTAKNGSPILTDALAYMECEIQSSLECSDHYILYCTVEDGRVSKPDGLTAVRHRKVGNYY.

Positions 50–243 (QNGTTYNSYL…GKIKIIANGH (194 aa)) are zinc metallo-hydrolase. Fe cation contacts are provided by His-99, Glu-101, Asp-103, His-166, Asp-185, and His-243. One can recognise a Flavodoxin-like domain in the interval 272 to 460 (VGLFYVADYG…MLASWVSQAS (189 aa)). Positions 461–579 (LQPLGFTIAV…VRHRKVGNYY (119 aa)) are flavodoxin-reductase-like.

It in the N-terminal section; belongs to the zinc metallo-hydrolase group 3 family. The protein in the C-terminal section; belongs to the flavodoxin reductase family. The cofactor is Fe cation.

Functionally, mediates electron transfer from NADH to oxygen, reducing it to water. This modular protein has 3 redox cofactors, in other organisms the same activity requires 2 or 3 proteins. In Nostoc sp. (strain PCC 7120 / SAG 25.82 / UTEX 2576), this protein is Putative diflavin flavoprotein A 2 (dfa2).